The sequence spans 213 residues: Protein HSH49 (213 aa).

2 RRM domains span residues 9–88 and 108–185; these read NTVY…QVTN and AKLF…YAFK.

Interacts with RDS3.

It is found in the nucleus. Functionally, possible SF3b-like factor. This Saccharomyces cerevisiae (strain ATCC 204508 / S288c) (Baker's yeast) protein is Protein HSH49 (HSH49).